Reading from the N-terminus, the 461-residue chain is Argininosuccinate lyase (461 aa).

It belongs to the lyase 1 family. Argininosuccinate lyase subfamily.

The protein localises to the cytoplasm. It carries out the reaction 2-(N(omega)-L-arginino)succinate = fumarate + L-arginine. The protein operates within amino-acid biosynthesis; L-arginine biosynthesis; L-arginine from L-ornithine and carbamoyl phosphate: step 3/3. The chain is Argininosuccinate lyase from Clostridium beijerinckii (strain ATCC 51743 / NCIMB 8052) (Clostridium acetobutylicum).